The primary structure comprises 634 residues: Ankyrin repeat and SOCS box protein 2 (634 aa).

Residues 26-45 (SEEELVQMAIEQSLADKTRG) form the UIM domain. A disordered region spans residues 35-81 (IEQSLADKTRGPTPAETSVSSQTNHQPGHIHPWTRSSSPPESPPARA). The segment covering 49–60 (AETSVSSQTNHQ) has biased composition (polar residues). 12 ANK repeats span residues 104 to 133 (AAMD…NLAE), 137 to 167 (EGWL…TIDQ), 171 to 200 (QEET…EPDI), 204 to 233 (SRET…DANH), 237 to 266 (RGWT…KVEA), 270 to 299 (YSIT…DINT), 303 to 332 (DSAS…DANK), 336 to 365 (DGLL…RTRV), 368 to 397 (SGIS…DVNT), 410 to 439 (RRTS…DPNR), 440 to 469 (DVIS…NIDA), and 476 to 504 (TAFP…DGEP). Serine 371 bears the Phosphoserine mark. Residues 580-634 (EDWAVIKEKAEPPRPLAHLCRLRVRKAIGKYRIKLLDTLPLPGRLIRYLKYENTQ) form the SOCS box domain.

The protein belongs to the ankyrin SOCS box (ASB) family. In terms of assembly, component of a probable ECS E3 ubiquitin-protein ligase complex which contains CUL5, either RBX1 or RNF7/RBX2, Elongin BC complex (ELOB and ELOC) and ASB2. Interacts with SKP2. Through its interaction with SKP2, likely to bridge the formation of dimeric E3-ubiquitin-protein ligase complexes composed of an ECS complex and an SCF(SKP2) complex. Interacts with JAK2; the interaction targets JAK2 for Notch-mediated proteasomal degradation. Interacts with TCF3/E2A; the interaction is mediated by SKP2 and targets TCF3 for Notch-mediated proteasomal degradation. Interacts with DES. In terms of processing, monoubiquitinated.

It localises to the cytoplasm. It is found in the cytoskeleton. The protein resides in the stress fiber. The protein localises to the myofibril. Its subcellular location is the sarcomere. It localises to the z line. It functions in the pathway protein modification; protein ubiquitination. Its function is as follows. Substrate-recognition component of a SCF-like ECS (Elongin-Cullin-SOCS-box protein) E3 ubiquitin-protein ligase complex which mediates the ubiquitination and subsequent proteasomal degradation of target proteins. Mediates Notch-induced ubiquitination and degradation of substrates including E2A and JAK2. Required during embryonic heart development for complete heart looping. Required for cardiomyocyte differentiation. Involved in myogenic differentiation and targets filamin FLNB for proteasomal degradation but not filamin FLNA. Also targets DES for proteasomal degradation. Acts as a negative regulator of skeletal muscle mass. The polypeptide is Ankyrin repeat and SOCS box protein 2 (Rattus norvegicus (Rat)).